A 199-amino-acid chain; its full sequence is FMN-dependent NADH:quinone oxidoreductase 2 (199 aa).

FMN-binding positions include Ser10, 17-19 (SDS), and 135-138 (TKGG).

The protein belongs to the azoreductase type 1 family. In terms of assembly, homodimer. FMN is required as a cofactor.

The enzyme catalyses 2 a quinone + NADH + H(+) = 2 a 1,4-benzosemiquinone + NAD(+). It carries out the reaction N,N-dimethyl-1,4-phenylenediamine + anthranilate + 2 NAD(+) = 2-(4-dimethylaminophenyl)diazenylbenzoate + 2 NADH + 2 H(+). Its function is as follows. Quinone reductase that provides resistance to thiol-specific stress caused by electrophilic quinones. Functionally, also exhibits azoreductase activity. Catalyzes the reductive cleavage of the azo bond in aromatic azo compounds to the corresponding amines. The chain is FMN-dependent NADH:quinone oxidoreductase 2 from Mesoplasma florum (strain ATCC 33453 / NBRC 100688 / NCTC 11704 / L1) (Acholeplasma florum).